The chain runs to 297 residues: UPF0761 membrane protein VC0395_A2314/VC395_2854 (297 aa).

The next 6 helical transmembrane spans lie at 43 to 63 (LLSMVPMLTVLLSILSSFALF), 100 to 120 (MTAVGGAFLFVAAIMLISNID), 135 to 155 (AVFSFSMYWMILTLGPILVGA), 181 to 201 (FLRWLPFVLSYCAFVGLYLLV), 213 to 233 (LGALIAAILFELSKKGFAAYI), and 245 to 265 (ALAAIPILFVWVYLCWLIVLV).

Belongs to the UPF0761 family.

It localises to the cell inner membrane. This is UPF0761 membrane protein VC0395_A2314/VC395_2854 from Vibrio cholerae serotype O1 (strain ATCC 39541 / Classical Ogawa 395 / O395).